Here is a 371-residue protein sequence, read N- to C-terminus: MFYSLTIISILEVLLVLVPSLLAVAYVTVAERKTMASMQRRLGPNAVGYLGLLQAFADALKLLLKEYVALTQANMTLFFLGPVITLIFSLLGYAVIPYGPSLVIQDVNLGILYMLAVSSLATYGILLAGWSANSKYAFLGSLRSAAQLISYELVLSSAILLVIMLTGSFNLGVNTESQRAVLFVLPLLPIFIIFFIGSIAETNRAPFDLAEAESELVSGFMTEHAAVVFVFFFLAEYGSIVLMCILTSILFLGGYLFINLKDVFNILDFVYSNLFIFEINWMVSERSYTEDFFNNYKSILEGWLYGWIIGLKSSIMIFIFILGRASFPRIRYDQLMGFCWTVLLPIIFALIILVPCILESFYILPWNLNLF.

The next 10 membrane-spanning stretches (helical) occupy residues 7–27, 44–64, 77–97, 109–129, 153–173, 180–200, 226–246, 263–283, 302–322, and 338–358; these read IISI…VAYV, PNAV…KLLL, LFFL…AVIP, LGIL…LLAG, LVLS…NLGV, AVLF…GSIA, AVVF…MCIL, VFNI…NWMV, GWLY…IFIL, and FCWT…PCIL.

This sequence belongs to the complex I subunit 1 family.

The protein localises to the mitochondrion inner membrane. The catalysed reaction is a ubiquinone + NADH + 5 H(+)(in) = a ubiquinol + NAD(+) + 4 H(+)(out). Functionally, core subunit of the mitochondrial membrane respiratory chain NADH dehydrogenase (Complex I) that is believed to belong to the minimal assembly required for catalysis. Complex I functions in the transfer of electrons from NADH to the respiratory chain. The immediate electron acceptor for the enzyme is believed to be ubiquinone. In Neurospora crassa (strain ATCC 24698 / 74-OR23-1A / CBS 708.71 / DSM 1257 / FGSC 987), this protein is NADH-ubiquinone oxidoreductase chain 1 (ndh-1).